The chain runs to 233 residues: uncharacterized protein (233 aa).

The tract at residues 196-212 is the nascent chain stimulates ribosomal stalling during translation by interfering with the conformation of the peptidyl transferase center (PTC), and the translating mRNA by adopting a difficult-to-decode structure at the ribosome decoding center; the sequence is FFYEDYLIFDCRAKRRK.

Acts as an endogenous target of the ribosome quality control (RQC) pathway. During translation, the nascent chain has a propensity to stall ribosomes, thereby stimulating activation of the RQC pathway. This is an uncharacterized protein from Saccharomyces cerevisiae (strain ATCC 204508 / S288c) (Baker's yeast).